A 339-amino-acid polypeptide reads, in one-letter code: MRVYYDRDADINLVKGKKVAIIGYGSQGHAHALNLRDSGVKEIAIALREGSSTAKKAEAEGLTVKTVVDAAQWADVVMVLTPDELQADIYHQLLAKNLKQGAALLFAHGLSVHFNLIEPRADLDVLMVAPKGPGHTVRSEYKRGGGVPCLIAVAQNASGNAHDIALSYASAIGGGRAGIIETTFKEECETDLFGEQAVLCGGLVELIRAGFETLVEAGYAPEMAYFECLHEVKLIVDLIYEGGIANMNYSISNTAEYGEYVTGPRIITPETKAEMKRVLEDIQGGKFTRDWMLENKVHQTSFKATRAKVAAHPIEKVGAELRAMMPWIGASKLVDKSKN.

One can recognise a KARI N-terminal Rossmann domain in the interval 1 to 182 (MRVYYDRDAD…GGGRAGIIET (182 aa)). Residues 24 to 27 (YGSQ), Arg48, Ser51, Thr53, and 83 to 86 (DELQ) each bind NADP(+). His108 is a catalytic residue. Residue Gly134 coordinates NADP(+). Residues 183 to 328 (TFKEECETDL…AELRAMMPWI (146 aa)) form the KARI C-terminal knotted domain. Residues Asp191, Glu195, Glu227, and Glu231 each contribute to the Mg(2+) site. Ser252 lines the substrate pocket.

This sequence belongs to the ketol-acid reductoisomerase family. The cofactor is Mg(2+).

It catalyses the reaction (2R)-2,3-dihydroxy-3-methylbutanoate + NADP(+) = (2S)-2-acetolactate + NADPH + H(+). The enzyme catalyses (2R,3R)-2,3-dihydroxy-3-methylpentanoate + NADP(+) = (S)-2-ethyl-2-hydroxy-3-oxobutanoate + NADPH + H(+). It functions in the pathway amino-acid biosynthesis; L-isoleucine biosynthesis; L-isoleucine from 2-oxobutanoate: step 2/4. It participates in amino-acid biosynthesis; L-valine biosynthesis; L-valine from pyruvate: step 2/4. Functionally, involved in the biosynthesis of branched-chain amino acids (BCAA). Catalyzes an alkyl-migration followed by a ketol-acid reduction of (S)-2-acetolactate (S2AL) to yield (R)-2,3-dihydroxy-isovalerate. In the isomerase reaction, S2AL is rearranged via a Mg-dependent methyl migration to produce 3-hydroxy-3-methyl-2-ketobutyrate (HMKB). In the reductase reaction, this 2-ketoacid undergoes a metal-dependent reduction by NADPH to yield (R)-2,3-dihydroxy-isovalerate. The protein is Ketol-acid reductoisomerase (NADP(+)) of Beijerinckia indica subsp. indica (strain ATCC 9039 / DSM 1715 / NCIMB 8712).